Reading from the N-terminus, the 632-residue chain is 1,4-alpha-glucan branching enzyme GlgB (632 aa).

Catalysis depends on aspartate 310, which acts as the Nucleophile. The active-site Proton donor is the glutamate 363.

Belongs to the glycosyl hydrolase 13 family. GlgB subfamily. As to quaternary structure, monomer.

The catalysed reaction is Transfers a segment of a (1-&gt;4)-alpha-D-glucan chain to a primary hydroxy group in a similar glucan chain.. It functions in the pathway glycan biosynthesis; glycogen biosynthesis. Catalyzes the formation of the alpha-1,6-glucosidic linkages in glycogen by scission of a 1,4-alpha-linked oligosaccharide from growing alpha-1,4-glucan chains and the subsequent attachment of the oligosaccharide to the alpha-1,6 position. This Desulfitobacterium hafniense (strain Y51) protein is 1,4-alpha-glucan branching enzyme GlgB.